The sequence spans 215 residues: Somatotropin (215 aa).

Positions 1–25 (MAPGMRVCLLLLIAFTLLGPQRAAA) are cleaved as a signal peptide. Residue H44 coordinates Zn(2+). Phosphoserine is present on S130. E197 is a binding site for Zn(2+).

The protein belongs to the somatotropin/prolactin family.

Its subcellular location is the secreted. Its function is as follows. Plays an important role in growth control. Its major role in stimulating body growth is to stimulate the liver and other tissues to secrete IGF1. It stimulates both the differentiation and proliferation of myoblasts. It also stimulates amino acid uptake and protein synthesis in muscle and other tissues. This Monodelphis domestica (Gray short-tailed opossum) protein is Somatotropin (GH1).